A 590-amino-acid chain; its full sequence is Glypican-3 (590 aa).

Residues 1–25 (MMPGLKLYGALILCVLVLPFSRPSS) form the signal peptide. 7 disulfides stabilise this stretch: Cys30–Cys67, Cys60–Cys255, Cys68–Cys258, Cys190–Cys342, Cys245–Cys278, Cys267–Cys418, and Cys271–Cys406. N-linked (GlcNAc...) asparagine glycosylation is found at Asn119 and Asn234. Asn414 carries N-linked (GlcNAc...) asparagine glycosylation. Disordered regions lie at residues 429–450 (PGPGLKRVHPHGSESKQKTPEP) and 476–520 (WRAR…SGLG). Over residues 495–513 (TDEDEEGLESGDCDDEDEC) the composition is skewed to acidic residues. 2 O-linked (Xyl...) (glycosaminoglycan) serine glycosylation sites follow: Ser504 and Ser517.

Belongs to the glypican family. In terms of assembly, heterodimer; disulfide-linked. Cleavage by a furin-like convertase results in production of alpha and beta chains which form a disulfide-linked heterodimer. Post-translationally, O-glycosylated; contains heparan sulfate and/or chondroitin sulfate. In terms of processing, cleaved intracellularly by a furin-like convertase to generate 2 subunits, alpha and beta, which remain associated through disulfide bonds and are associated with the cell surface via the GPI-anchor. This processing is essential for its role in inhibition of hedgehog signaling. A second proteolytic event may result in cleavage of the protein on the cell surface, separating it from the GPI-anchor and leading to its shedding from the cell surface. In terms of tissue distribution, maternally expressed and is almost ubiquitous during blastula and gastrula stages but becomes restricted to the prospective hindbrain by 24 hours post-fertilization.

The protein resides in the cell membrane. In terms of biological role, cell surface proteoglycan. Negatively regulates the hedgehog signaling pathway. Positively regulates the canonical and non-canonical Wnt signaling pathways. Binds to CD81 which decreases the availability of free CD81 for binding to the transcriptional repressor HHEX, resulting in nuclear translocation of HHEX and transcriptional repression. Inhibits the dipeptidyl peptidase activity of DPP4. Plays a role in limb patterning and skeletal development. Modulates the effects of growth factors on renal branching morphogenesis. Required for coronary vascular development. Plays a role in regulating cell movements during gastrulation. In Danio rerio (Zebrafish), this protein is Glypican-3.